Consider the following 339-residue polypeptide: NADH-quinone oxidoreductase subunit H (339 aa).

9 helical membrane-spanning segments follow: residues 9–29 (IFPLIIIALKVVAITIPLILC), 50–70 (PNVVGPFGLLQPIADAVKLLF), 82–102 (ILFILAPMITFILSLIGWAVI), 115–135 (VGVLYILAISSLSVYGIIIAG), 161–181 (MGLVIITVLLTNGTLNLSGII), 187–207 (MPWWIDLMLLPMGVVFFISVL), 235–255 (MGFALFFLGEYANMILVSAMT), 275–295 (IPGFFWFVFKVGFLLFCFLWI), and 311–331 (GWKVFLPLTLFWVVLVSSVLV).

This sequence belongs to the complex I subunit 1 family. As to quaternary structure, NDH-1 is composed of 14 different subunits. Subunits NuoA, H, J, K, L, M, N constitute the membrane sector of the complex.

Its subcellular location is the cell inner membrane. The enzyme catalyses a quinone + NADH + 5 H(+)(in) = a quinol + NAD(+) + 4 H(+)(out). NDH-1 shuttles electrons from NADH, via FMN and iron-sulfur (Fe-S) centers, to quinones in the respiratory chain. The immediate electron acceptor for the enzyme in this species is believed to be ubiquinone. Couples the redox reaction to proton translocation (for every two electrons transferred, four hydrogen ions are translocated across the cytoplasmic membrane), and thus conserves the redox energy in a proton gradient. This subunit may bind ubiquinone. The polypeptide is NADH-quinone oxidoreductase subunit H (Rickettsia conorii (strain ATCC VR-613 / Malish 7)).